A 214-amino-acid polypeptide reads, in one-letter code: 3,4-dihydroxy-2-butanone 4-phosphate synthase (214 aa).

D-ribulose 5-phosphate is bound by residues 37–38 (RE), Asp-42, 150–154 (RRGHT), and Glu-174. A Mg(2+)-binding site is contributed by Glu-38. His-153 lines the Mg(2+) pocket.

The protein belongs to the DHBP synthase family. In terms of assembly, homodimer. Mg(2+) is required as a cofactor. It depends on Mn(2+) as a cofactor.

It catalyses the reaction D-ribulose 5-phosphate = (2S)-2-hydroxy-3-oxobutyl phosphate + formate + H(+). It participates in cofactor biosynthesis; riboflavin biosynthesis; 2-hydroxy-3-oxobutyl phosphate from D-ribulose 5-phosphate: step 1/1. Functionally, catalyzes the conversion of D-ribulose 5-phosphate to formate and 3,4-dihydroxy-2-butanone 4-phosphate. The chain is 3,4-dihydroxy-2-butanone 4-phosphate synthase from Pasteurella multocida (strain Pm70).